Here is a 444-residue protein sequence, read N- to C-terminus: Type VI secretion system baseplate component TssK1 (444 aa).

As to quaternary structure, forms transient higher-order structures that correlated with dynamics of sheath component TssB1. Interacts with TssA1.

Core component of the H1 type VI (H1-T6SS) secretion system that plays a role in the release of toxins targeting both eukaryotic and prokaryotic species. Functions as a spatio-temporal marker for assembly of contractile apparatus made of TssB1 and TssC1. This role in assembly depends on TssM1. In Pseudomonas aeruginosa (strain ATCC 15692 / DSM 22644 / CIP 104116 / JCM 14847 / LMG 12228 / 1C / PRS 101 / PAO1), this protein is Type VI secretion system baseplate component TssK1.